The primary structure comprises 477 residues: ATP synthase subunit beta (477 aa).

An ATP-binding site is contributed by 163-170 (GGAGVGKT).

The protein belongs to the ATPase alpha/beta chains family. As to quaternary structure, F-type ATPases have 2 components, CF(1) - the catalytic core - and CF(0) - the membrane proton channel. CF(1) has five subunits: alpha(3), beta(3), gamma(1), delta(1), epsilon(1). CF(0) has four main subunits: a(1), b(1), b'(1) and c(9-12).

It localises to the cellular thylakoid membrane. The enzyme catalyses ATP + H2O + 4 H(+)(in) = ADP + phosphate + 5 H(+)(out). Its function is as follows. Produces ATP from ADP in the presence of a proton gradient across the membrane. The catalytic sites are hosted primarily by the beta subunits. The sequence is that of ATP synthase subunit beta from Synechococcus sp. (strain JA-2-3B'a(2-13)) (Cyanobacteria bacterium Yellowstone B-Prime).